Consider the following 631-residue polypeptide: Phosphomethylpyrimidine synthase (631 aa).

Substrate is bound by residues Asn-239, Met-268, Tyr-297, His-333, 353–355 (SRG), 394–397 (DGLR), and Glu-433. Residue His-437 coordinates Zn(2+). Tyr-460 contacts substrate. Residue His-501 coordinates Zn(2+). [4Fe-4S] cluster-binding residues include Cys-581, Cys-584, and Cys-589.

Belongs to the ThiC family. Homodimer. It depends on [4Fe-4S] cluster as a cofactor.

The catalysed reaction is 5-amino-1-(5-phospho-beta-D-ribosyl)imidazole + S-adenosyl-L-methionine = 4-amino-2-methyl-5-(phosphooxymethyl)pyrimidine + CO + 5'-deoxyadenosine + formate + L-methionine + 3 H(+). It participates in cofactor biosynthesis; thiamine diphosphate biosynthesis. Catalyzes the synthesis of the hydroxymethylpyrimidine phosphate (HMP-P) moiety of thiamine from aminoimidazole ribotide (AIR) in a radical S-adenosyl-L-methionine (SAM)-dependent reaction. This is Phosphomethylpyrimidine synthase from Citrobacter koseri (strain ATCC BAA-895 / CDC 4225-83 / SGSC4696).